The following is a 97-amino-acid chain: Integration host factor subunit alpha (97 aa).

It belongs to the bacterial histone-like protein family. Heterodimer of an alpha and a beta chain.

This protein is one of the two subunits of integration host factor, a specific DNA-binding protein that functions in genetic recombination as well as in transcriptional and translational control. The chain is Integration host factor subunit alpha from Hydrogenovibrio crunogenus (strain DSM 25203 / XCL-2) (Thiomicrospira crunogena).